The chain runs to 540 residues: Zinc finger protein 768 (540 aa).

2 disordered regions span residues 1–166 (MERE…FEAQ) and 239–258 (TGAL…GQGP). 3 positions are modified to phosphoserine: Ser17, Ser18, and Ser23. A Phosphotyrosine modification is found at Tyr27. Ser33 is modified (phosphoserine). The span at 34–53 (ENEEEEISQQEGSGDYEVEE) shows a compositional bias: acidic residues. 11 positions are modified to phosphoserine: Ser62, Ser69, Ser76, Ser83, Ser90, Ser97, Ser104, Ser107, Ser111, Ser118, and Ser125. Over residues 62 to 77 (SPGFEPQSPEFEPQSP) the composition is skewed to low complexity. Polar residues predominate over residues 107–119 (SDSQSPEFESQSP). Phosphotyrosine is present on Tyr128. Ser132 carries the post-translational modification Phosphoserine. A Phosphotyrosine modification is found at Tyr135. Ser139 is subject to Phosphoserine. Position 142 is a phosphotyrosine (Tyr142). Ser144 and Ser147 each carry phosphoserine. Over residues 149 to 166 (YESQNTELKTQSPEFEAQ) the composition is skewed to polar residues. Thr158 is subject to Phosphothreonine. Ser160 bears the Phosphoserine mark. Residues 261 to 283 (NICGICGKSFGRGSTLIQHQRIH) form a C2H2-type 1 zinc finger. Thr284 is subject to Phosphothreonine. A Phosphotyrosine modification is found at Tyr289. 4 C2H2-type zinc fingers span residues 289–311 (YKCE…QRTH), 317–339 (YKCP…QRTH), 345–367 (YKCP…QRTH), and 373–395 (YSCT…QRVH). Phosphoserine occurs at positions 295 and 299. Thr396 is modified (phosphothreonine). 5 C2H2-type zinc fingers span residues 401 to 423 (FSCG…ARSH), 429 to 451 (FKCP…ARTH), 457 to 479 (YSCP…QRSH), 485 to 507 (YRCA…HRVH), and 513 to 535 (YKCD…QRTH). Position 442 is a phosphoserine (Ser442).

This sequence belongs to the krueppel C2H2-type zinc-finger protein family. As to quaternary structure, interacts (via zinc-finger domains) with TP53 (via N-terminus); interaction might be facilitated by TP53 oligomerization state. Interacts with ELP3. In terms of processing, may be phosphorylated at residue 'Ser-5' of the tandem heptapeptide repeats in the N-terminus. Phosphorylation might be increased upon RAS pathway activation and negatively regulate protein stability.

It localises to the nucleus. The protein resides in the chromosome. Binds to mammalian-wide interspersed repeat (MIRs) sequences in euchromatin and promoter regions of genes at the consensus sequence 5'-GCTGTGTG-[N20]-CCTCTCTG-3', consisting of two anchor regions connected by a linker region; the linker region probably does not contribute to the binding specificity. Required for cell homeostasis. May be involved in transcriptional regulation. This Homo sapiens (Human) protein is Zinc finger protein 768 (ZNF768).